A 123-amino-acid polypeptide reads, in one-letter code: Large ribosomal subunit protein bL17 (123 aa).

Belongs to the bacterial ribosomal protein bL17 family. As to quaternary structure, part of the 50S ribosomal subunit. Contacts protein L32.

The polypeptide is Large ribosomal subunit protein bL17 (Dichelobacter nodosus (strain VCS1703A)).